Consider the following 155-residue polypeptide: Transcription antitermination protein NusB (155 aa).

This sequence belongs to the NusB family.

In terms of biological role, involved in transcription antitermination. Required for transcription of ribosomal RNA (rRNA) genes. Binds specifically to the boxA antiterminator sequence of the ribosomal RNA (rrn) operons. The sequence is that of Transcription antitermination protein NusB from Vibrio atlanticus (strain LGP32) (Vibrio splendidus (strain Mel32)).